Consider the following 575-residue polypeptide: Beta-amylase 1, chloroplastic (575 aa).

A chloroplast-targeting transit peptide spans 1–41 (MALNLSHQLGVLAGTPIKSGEMTDSSLLSISPPSARMMTPK). 2 positions are modified to phosphoserine: Ser55 and Ser59. An intrachain disulfide couples Cys73 to Cys511. Positions 147, 187, and 195 each coordinate substrate. The active-site Proton donor is the Glu279. Residues Lys392, His397, and Thr439 each contribute to the substrate site. Residue Glu477 is the Proton acceptor of the active site. Residues 478-479 (NA) and Arg517 contribute to the substrate site.

The protein belongs to the glycosyl hydrolase 14 family. Expressed in leaves, roots, flowers, pollen, and seeds.

It localises to the plastid. The protein localises to the chloroplast. It catalyses the reaction Hydrolysis of (1-&gt;4)-alpha-D-glucosidic linkages in polysaccharides so as to remove successive maltose units from the non-reducing ends of the chains.. With respect to regulation, redox regulation; active in reducing conditions, inactive in oxidizing conditions. Thioredoxins f1, m1, and y1 mediate the reversible reductive activation of oxidized BAM1. Functionally, beta-amylase activity. Can use p-nitrophenyl maltopentaoside (PNPG5) as substrate only in reduced form. Can play a minor role in the starch degradation and maltose metabolism in chloroplasts during the night. More active on phosphorylated glucan. Interacts directly with starch or other alpha-1,4-glucan. The polypeptide is Beta-amylase 1, chloroplastic (BAM1) (Arabidopsis thaliana (Mouse-ear cress)).